The chain runs to 320 residues: Cytochrome c biogenesis protein CcsA (320 aa).

The next 8 membrane-spanning stretches (helical) occupy residues 9–29 (ILIHISFSVVSIVITIYFLTL), 44–64 (GMIVTFFCITGLLAARWIYSG), 71–91 (LYESLIFLSWSFSIIHMVCYF), 99–119 (LNAITGPSAILTQGFATSGLL), 144–164 (MVLGYAALLCGSLLSVALLVI), 226–246 (IISLGFIFLTIGILSGAVWAN), 261–281 (WAFITWTIFAIYLHIRTNINL), and 287–307 (AIVASMGFLIIWICYFGVNLL).

Belongs to the CcmF/CycK/Ccl1/NrfE/CcsA family. May interact with Ccs1.

The protein resides in the plastid. Its subcellular location is the chloroplast thylakoid membrane. Required during biogenesis of c-type cytochromes (cytochrome c6 and cytochrome f) at the step of heme attachment. In Carica papaya (Papaya), this protein is Cytochrome c biogenesis protein CcsA.